A 281-amino-acid chain; its full sequence is NADPH-dependent 7-cyano-7-deazaguanine reductase (281 aa).

87-89 is a binding site for substrate; that stretch reads IES. NADPH is bound at residue 89–90; that stretch reads SK. The active-site Thioimide intermediate is C188. Catalysis depends on D195, which acts as the Proton donor. Residue 227–228 participates in substrate binding; sequence HE. Residue 256-257 participates in NADPH binding; the sequence is RG. The tract at residues 261–281 is disordered; that stretch reads INPYRSTEQDKPAHNHRMARQ.

This sequence belongs to the GTP cyclohydrolase I family. QueF type 2 subfamily. In terms of assembly, homodimer.

The protein resides in the cytoplasm. The enzyme catalyses 7-aminomethyl-7-carbaguanine + 2 NADP(+) = 7-cyano-7-deazaguanine + 2 NADPH + 3 H(+). It participates in tRNA modification; tRNA-queuosine biosynthesis. Its function is as follows. Catalyzes the NADPH-dependent reduction of 7-cyano-7-deazaguanine (preQ0) to 7-aminomethyl-7-deazaguanine (preQ1). This is NADPH-dependent 7-cyano-7-deazaguanine reductase from Vibrio parahaemolyticus serotype O3:K6 (strain RIMD 2210633).